Consider the following 446-residue polypeptide: Putative ankyrin repeat protein L273 (446 aa).

ANK repeat units lie at residues 71-100 (NGEF…KSNM), 124-153 (DHNK…RMRP), 206-237 (TDIE…KILM), 245-277 (VWVS…KMHV), 303-332 (ELEY…NSYY), and 365-394 (YTDI…QQII).

The chain is Putative ankyrin repeat protein L273 from Acanthamoeba polyphaga (Amoeba).